The chain runs to 208 residues: Small ribosomal subunit protein uS4 (208 aa).

Residues 95–157 (RRIDNVVYRA…DSLKKLVRSN (63 aa)) enclose the S4 RNA-binding domain.

The protein belongs to the universal ribosomal protein uS4 family. As to quaternary structure, part of the 30S ribosomal subunit. Contacts protein S5. The interaction surface between S4 and S5 is involved in control of translational fidelity.

Its function is as follows. One of the primary rRNA binding proteins, it binds directly to 16S rRNA where it nucleates assembly of the body of the 30S subunit. With S5 and S12 plays an important role in translational accuracy. The chain is Small ribosomal subunit protein uS4 from Borrelia hermsii (strain HS1 / DAH).